The following is a 143-amino-acid chain: Transcriptional regulator MraZ (143 aa).

2 SpoVT-AbrB domains span residues 5–47 (EYQH…PQDE) and 76–119 (AAEL…STEK).

It belongs to the MraZ family. As to quaternary structure, forms oligomers.

The protein resides in the cytoplasm. The protein localises to the nucleoid. In Syntrophomonas wolfei subsp. wolfei (strain DSM 2245B / Goettingen), this protein is Transcriptional regulator MraZ.